Reading from the N-terminus, the 334-residue chain is MDYEDLKKRVWDLLAQNIESNYRVAVVVVGHPGSGKSTMAQRLKRDLNQEFQSHLKARRGGLRISAGIAAESLDETVPVASGALVEEARRGFFAHVEDPGFKPHKFYDGDGTAVIFGRGGLPNSVRIASEALDPASSVNIAEVVPMDGFHLSRAHLDHFADAAAAHKRRGAPWTFDSNNYLQLCKLLAATCKWKPAKRPKGETLMETICDTFAQCPVISYPGFDHAAKDPVRDQHVLTGFTRVLIFDGLYLLYDQENWAHIYHSLASTGAVLVVNVTASEETRETRVATRHFAAGLVGSIEEGVRKFRENDLLNAKLIEEHTLGGVPTLILSND.

Position 30-38 (30-38 (GHPGSGKST)) interacts with ATP.

It belongs to the YFH7 family.

ATP-dependent kinase that could be involved in endoplasmic reticulum membrane assembly. This is ATP-dependent kinase YFH7 (YFH7) from Eremothecium gossypii (strain ATCC 10895 / CBS 109.51 / FGSC 9923 / NRRL Y-1056) (Yeast).